The following is a 662-amino-acid chain: MTNLEKMREKLQDQINYHNVLYHQKNKPEISDAEYDELKKKLAEIEPEIYATQDSVGAPPDERFSKVEHQEPMLSLENAYDEQGVEKFLSKIKRFLIEDKIEILCEPKIDGLSFSAIYEDGRFVKAATRGDGFVGEDVTHNVATIKGFPKFLQGVQGRLEVRGEIYISNSDFLKLNENDEFANPRNAAAGSLKQLDANITASRPLRYFAYSLIGGAEKSQSEVLNKLEALGFCVNEHQSLTSSLDGMLKFYNEVYNCRYNLDYDIDGIVYKVNDLVLQNRLGNTHKAPRSALAYKFSAVYAKTKLNKIFIQVGRTGVLTPVADLVPVNVGGVLVSRASLHNQDEIKRKDIREGDIVTIKRAGDVIPQIVEVSRDSRLPNTPEFVFPEVCPECGSKVRQVEGEAAVRCPEEFACKAQMIEKLKHFVSKDAFDIVGLGDKQIEFFYDLGLIKQIHDIFTLEERLDEFNLEEQSGWGEKSIANLLNSIQSRRVITLDRFIFSLGIRFIGQVAAELLADYYVSYNNWYNSMIELSLDNTELVGIDGIGKKGAESLESFFSKEHNIKMLNDLTACLQILPVSSNSSNSVLNNKIIVFTGKLLAMSRGEAKVRAKTLGAKVSSHLSAKTDYLIAGEKPGSKYKKAVELGVEILDEDQWHKVISLGVFK.

Residues 32–36 (DAEYD), 75–76 (SL), and E106 contribute to the NAD(+) site. K108 functions as the N6-AMP-lysine intermediate in the catalytic mechanism. The NAD(+) site is built by R129, E164, K271, and K295. Zn(2+) contacts are provided by C389, C392, C407, and C413. Residues 580 to 662 (SSNSVLNNKI…HKVISLGVFK (83 aa)) enclose the BRCT domain.

It belongs to the NAD-dependent DNA ligase family. LigA subfamily. Requires Mg(2+) as cofactor. The cofactor is Mn(2+).

It carries out the reaction NAD(+) + (deoxyribonucleotide)n-3'-hydroxyl + 5'-phospho-(deoxyribonucleotide)m = (deoxyribonucleotide)n+m + AMP + beta-nicotinamide D-nucleotide.. Functionally, DNA ligase that catalyzes the formation of phosphodiester linkages between 5'-phosphoryl and 3'-hydroxyl groups in double-stranded DNA using NAD as a coenzyme and as the energy source for the reaction. It is essential for DNA replication and repair of damaged DNA. In Wolbachia pipientis wMel, this protein is DNA ligase.